The following is a 373-amino-acid chain: Chorismate synthase (373 aa).

An NADP(+)-binding site is contributed by Arg46. Residues 123–125 (RSS), 251–252 (NA), Gly295, 310–314 (KPTPS), and Arg337 each bind FMN.

The protein belongs to the chorismate synthase family. It depends on FMNH2 as a cofactor.

It carries out the reaction 5-O-(1-carboxyvinyl)-3-phosphoshikimate = chorismate + phosphate. The protein operates within metabolic intermediate biosynthesis; chorismate biosynthesis; chorismate from D-erythrose 4-phosphate and phosphoenolpyruvate: step 7/7. In terms of biological role, catalyzes the anti-1,4-elimination of the C-3 phosphate and the C-6 proR hydrogen from 5-enolpyruvylshikimate-3-phosphate (EPSP) to yield chorismate, which is the branch point compound that serves as the starting substrate for the three terminal pathways of aromatic amino acid biosynthesis. This reaction introduces a second double bond into the aromatic ring system. This Methanococcus maripaludis (strain C7 / ATCC BAA-1331) protein is Chorismate synthase.